A 101-amino-acid polypeptide reads, in one-letter code: Protein Tat (101 aa).

Residues 1–20 (MEPVDPNLEPWKHPGSQPTT) form a disordered region. The interval 1–24 (MEPVDPNLEPWKHPGSQPTTACSN) is interaction with human CREBBP. The transactivation stretch occupies residues 1–48 (MEPVDPNLEPWKHPGSQPTTACSNCYCKVCCWHCQLCFLKKGLGISYG). Zn(2+) contacts are provided by Cys-22, Cys-25, and Cys-27. Residues 22–37 (CSNCYCKVCCWHCQLC) are cysteine-rich. Lys-28 is subject to N6-acetyllysine; by host PCAF. Zn(2+) contacts are provided by Cys-30, His-33, Cys-34, and Cys-37. Positions 38-48 (FLKKGLGISYG) are core. The tract at residues 48–101 (GKKKRKPRRGPPQGSKDHQTLIPKQPLPQSQRVSAGQEESKKKVESKAKTDRFA) is disordered. The short motif at 49–57 (KKKRKPRRG) is the Nuclear localization signal, RNA-binding (TAR), and protein transduction element. The tract at residues 49 to 86 (KKKRKPRRGPPQGSKDHQTLIPKQPLPQSQRVSAGQEE) is interaction with the host capping enzyme RNGTT. N6-acetyllysine; by host EP300 and GCN5L2 is present on residues Lys-50 and Lys-51. Arg-52 carries the asymmetric dimethylarginine; by host PRMT6 modification. Residue Lys-71 forms a Glycyl lysine isopeptide (Lys-Gly) (interchain with G-Cter in ubiquitin) linkage. Basic and acidic residues predominate over residues 85-101 (EESKKKVESKAKTDRFA).

This sequence belongs to the lentiviruses Tat family. As to quaternary structure, interacts with host CCNT1. Associates with the P-TEFb complex composed at least of Tat, P-TEFb (CDK9 and CCNT1), TAR RNA, RNA Pol II. Recruits the HATs CREBBP, TAF1/TFIID, EP300, PCAF and GCN5L2. Interacts with host KAT5/Tip60; this interaction targets the latter to degradation. Interacts with the host deacetylase SIRT1. Interacts with host capping enzyme RNGTT; this interaction stimulates RNGTT. Binds to host KDR, and to the host integrins ITGAV/ITGB3 and ITGA5/ITGB1. Interacts with host KPNB1/importin beta-1 without previous binding to KPNA1/importin alpha-1. Interacts with EIF2AK2. Interacts with host nucleosome assembly protein NAP1L1; this interaction may be required for the transport of Tat within the nucleus, since the two proteins interact at the nuclear rim. Interacts with host C1QBP/SF2P32; this interaction involves lysine-acetylated Tat. Interacts with the host chemokine receptors CCR2, CCR3 and CXCR4. Interacts with host DPP4/CD26; this interaction may trigger an anti-proliferative effect. Interacts with host LDLR. Interacts with the host extracellular matrix metalloproteinase MMP1. Interacts with host PRMT6; this interaction mediates Tat's methylation. Interacts with, and is ubiquitinated by MDM2/Hdm2. Interacts with host PSMC3 and HTATIP2. Interacts with STAB1; this interaction may overcome SATB1-mediated repression of IL2 and IL2RA (interleukin) in T cells by binding to the same domain than HDAC1. Interacts (when acetylated) with human CDK13, thereby increasing HIV-1 mRNA splicing and promoting the production of the doubly spliced HIV-1 protein Nef. Interacts with host TBP; this interaction modulates the activity of transcriptional pre-initiation complex. Interacts with host RELA. Interacts with host PLSCR1; this interaction negatively regulates Tat transactivation activity by altering its subcellular distribution. In terms of processing, asymmetrical arginine methylation by host PRMT6 seems to diminish the transactivation capacity of Tat and affects the interaction with host CCNT1. Post-translationally, acetylation by EP300, CREBBP, GCN5L2/GCN5 and PCAF regulates the transactivation activity of Tat. EP300-mediated acetylation of Lys-50 promotes dissociation of Tat from the TAR RNA through the competitive binding to PCAF's bromodomain. In addition, the non-acetylated Tat's N-terminus can also interact with PCAF. PCAF-mediated acetylation of Lys-28 enhances Tat's binding to CCNT1. Lys-50 is deacetylated by SIRT1. Polyubiquitination by host MDM2 does not target Tat to degradation, but activates its transactivation function and fosters interaction with CCNT1 and TAR RNA. In terms of processing, phosphorylated by EIF2AK2 on serine and threonine residues adjacent to the basic region important for TAR RNA binding and function. Phosphorylation of Tat by EIF2AK2 is dependent on the prior activation of EIF2AK2 by dsRNA.

Its subcellular location is the host nucleus. The protein localises to the host nucleolus. The protein resides in the host cytoplasm. It localises to the secreted. Transcriptional activator that increases RNA Pol II processivity, thereby increasing the level of full-length viral transcripts. Recognizes a hairpin structure at the 5'-LTR of the nascent viral mRNAs referred to as the transactivation responsive RNA element (TAR) and recruits the cyclin T1-CDK9 complex (P-TEFb complex) that will in turn hyperphosphorylate the RNA polymerase II to allow efficient elongation. The CDK9 component of P-TEFb and other Tat-activated kinases hyperphosphorylate the C-terminus of RNA Pol II that becomes stabilized and much more processive. Other factors such as HTATSF1/Tat-SF1, SUPT5H/SPT5, and HTATIP2 are also important for Tat's function. Besides its effect on RNA Pol II processivity, Tat induces chromatin remodeling of proviral genes by recruiting the histone acetyltransferases (HATs) CREBBP, EP300 and PCAF to the chromatin. This also contributes to the increase in proviral transcription rate, especially when the provirus integrates in transcriptionally silent region of the host genome. To ensure maximal activation of the LTR, Tat mediates nuclear translocation of NF-kappa-B by interacting with host RELA. Through its interaction with host TBP, Tat may also modulate transcription initiation. Tat can reactivate a latently infected cell by penetrating in it and transactivating its LTR promoter. In the cytoplasm, Tat is thought to act as a translational activator of HIV-1 mRNAs. Its function is as follows. Extracellular circulating Tat can be endocytosed by surrounding uninfected cells via the binding to several surface receptors such as CD26, CXCR4, heparan sulfate proteoglycans (HSPG) or LDLR. Neurons are rarely infected, but they internalize Tat via their LDLR. Through its interaction with nuclear HATs, Tat is potentially able to control the acetylation-dependent cellular gene expression. Modulates the expression of many cellular genes involved in cell survival, proliferation or in coding for cytokines or cytokine receptors. Tat plays a role in T-cell and neurons apoptosis. Tat induced neurotoxicity and apoptosis probably contribute to neuroAIDS. Circulating Tat also acts as a chemokine-like and/or growth factor-like molecule that binds to specific receptors on the surface of the cells, affecting many cellular pathways. In the vascular system, Tat binds to ITGAV/ITGB3 and ITGA5/ITGB1 integrins dimers at the surface of endothelial cells and competes with bFGF for heparin-binding sites, leading to an excess of soluble bFGF. The chain is Protein Tat from Human immunodeficiency virus type 1 group M subtype A (isolate U455) (HIV-1).